The primary structure comprises 106 residues: Large ribosomal subunit protein uL24 (106 aa).

The protein belongs to the universal ribosomal protein uL24 family. Part of the 50S ribosomal subunit.

In terms of biological role, one of two assembly initiator proteins, it binds directly to the 5'-end of the 23S rRNA, where it nucleates assembly of the 50S subunit. Its function is as follows. One of the proteins that surrounds the polypeptide exit tunnel on the outside of the subunit. This Clostridium tetani (strain Massachusetts / E88) protein is Large ribosomal subunit protein uL24.